A 563-amino-acid polypeptide reads, in one-letter code: L-lactate permease (563 aa).

14 helical membrane passes run 14-34, 37-57, 73-93, 131-151, 157-177, 194-214, 220-240, 249-269, 304-324, 381-401, 419-439, 448-468, 506-526, and 542-562; these read LLLS…ALAI, MKGY…AVLV, AVYG…LYKI, GAAG…GLGF, AGIC…GIPI, MVGR…IIIM, ALEI…VQYL, LPDV…LKWW, IFKA…WGIP, LGSA…ITAI, LPIL…SSGM, ALTG…GVFI, VTGK…VGLA, and FLLL…SWMI.

It belongs to the lactate permease family.

It localises to the cell membrane. Its function is as follows. Is the principal permease for the uptake of L-lactate in B.subtilis. The polypeptide is L-lactate permease (lutP) (Bacillus subtilis (strain 168)).